Consider the following 234-residue polypeptide: UDP-2,3-diacylglucosamine hydrolase (234 aa).

Asp-9, His-11, Asp-42, Asn-80, and His-115 together coordinate Mn(2+). Residue 80–81 (NR) participates in substrate binding. Substrate contacts are provided by Asp-123, Ser-161, Lys-165, Lys-168, and His-196. His-196 and His-198 together coordinate Mn(2+).

The protein belongs to the LpxH family. It depends on Mn(2+) as a cofactor.

The protein resides in the cell inner membrane. It catalyses the reaction UDP-2-N,3-O-bis[(3R)-3-hydroxytetradecanoyl]-alpha-D-glucosamine + H2O = 2-N,3-O-bis[(3R)-3-hydroxytetradecanoyl]-alpha-D-glucosaminyl 1-phosphate + UMP + 2 H(+). It participates in glycolipid biosynthesis; lipid IV(A) biosynthesis; lipid IV(A) from (3R)-3-hydroxytetradecanoyl-[acyl-carrier-protein] and UDP-N-acetyl-alpha-D-glucosamine: step 4/6. Hydrolyzes the pyrophosphate bond of UDP-2,3-diacylglucosamine to yield 2,3-diacylglucosamine 1-phosphate (lipid X) and UMP by catalyzing the attack of water at the alpha-P atom. Involved in the biosynthesis of lipid A, a phosphorylated glycolipid that anchors the lipopolysaccharide to the outer membrane of the cell. This chain is UDP-2,3-diacylglucosamine hydrolase, found in Haemophilus ducreyi (strain 35000HP / ATCC 700724).